The sequence spans 864 residues: DNA mismatch repair protein MutS (864 aa).

ATP is bound at residue 607–614 (GPNMGGKS).

It belongs to the DNA mismatch repair MutS family.

In terms of biological role, this protein is involved in the repair of mismatches in DNA. It is possible that it carries out the mismatch recognition step. This protein has a weak ATPase activity. This Neisseria meningitidis serogroup C / serotype 2a (strain ATCC 700532 / DSM 15464 / FAM18) protein is DNA mismatch repair protein MutS.